The chain runs to 583 residues: Leucine-rich repeat-containing protein 47 (583 aa).

An N-acetylalanine modification is found at alanine 2. LRR repeat units follow at residues 76 to 95 (QLHS…SPEL), 100 to 121 (ALRV…QGLG), 130 to 152 (QLQS…ARCA), 154 to 175 (RLQS…LFRP), 180 to 202 (LLSE…AHLA), 203 to 225 (SLKT…ADCP), and 226 to 246 (KLKE…EKMV). A disordered region spans residues 260–300 (VGGRGGGKGKGRAEGSEKEESRRKRRERKQRREGGDGEEQD). The segment covering 270–281 (GRAEGSEKEESR) has biased composition (basic and acidic residues). A phosphoserine mark is found at serine 315 and serine 431. Residues 402-437 (LGRKEAKAKELVRQLQLEAEEQRKQKKRQSVSGLHR) adopt a coiled-coil conformation. At tyrosine 509 the chain carries Phosphotyrosine. The tract at residues 513-544 (NKEEGSLSDTEADAVSGQLPDPTTNPSAGKDG) is disordered. Phosphoserine occurs at positions 518 and 520.

The sequence is that of Leucine-rich repeat-containing protein 47 (LRRC47) from Homo sapiens (Human).